Reading from the N-terminus, the 263-residue chain is MKLKSFGVFGNPIKHSKSPLIHNACFLTFQKELGFLGHYHPILLPLESHIKSEFLHLGLSGANVTLPFKERAFQICDKIKGIALECGAVNTLVVENDELVGYNTDALGFWLSLGGEGYQSALILGSGGSAKALACELQKQGLKVSVLNRSARGLDFFQRLGCDCFMDPPKSTFDLIINATSASLNNELPLNKEVLKGYFKEGKLAYDLAYGFLTPFLSLAKELETPFQDGKDMLIYQAALSFEKFSASQIPYPKAFEVMRSVF.

Residues 16 to 18 (SKS) and Thr-65 contribute to the shikimate site. Lys-69 serves as the catalytic Proton acceptor. Shikimate is bound by residues Asn-90 and Asp-105. Residues 125-129 (GSGGS) and Leu-208 each bind NADP(+). Tyr-210 lines the shikimate pocket. Gly-230 provides a ligand contact to NADP(+).

Belongs to the shikimate dehydrogenase family. As to quaternary structure, homodimer.

The enzyme catalyses shikimate + NADP(+) = 3-dehydroshikimate + NADPH + H(+). Its pathway is metabolic intermediate biosynthesis; chorismate biosynthesis; chorismate from D-erythrose 4-phosphate and phosphoenolpyruvate: step 4/7. Inhibited by curcumin, 3-(2-naphthyloxy)-4-oxo-2-(trifluoromethyl)-4H-chromen-7-yl 3-chlorobenzoate, butyl 2-{[3-(2-naphthyloxy)-4-oxo-2-(trifluoromethyl)-4H-chromen-7-yl]oxy}propanoate, 2-({2-[(2-{[2-(2,3-dimethylanilino)-2-oxoethyl]sulfanyl}-1,3-benzothiazol-6-yl)amino]-2-oxoethyl}sulfanyl)-N-(2-naphthyl)acetamide, and maesaquinone diacetate. Functionally, involved in the biosynthesis of the chorismate, which leads to the biosynthesis of aromatic amino acids. Catalyzes the reversible NADPH linked reduction of 3-dehydroshikimate (DHSA) to yield shikimate (SA). It can also use NAD to oxidize shikimate. In Helicobacter pylori (Campylobacter pylori), this protein is Shikimate dehydrogenase (NADP(+)).